We begin with the raw amino-acid sequence, 338 residues long: MQVYYDKDCDLSIIQGKKVAILGYGSQGHAHACNLKDSGVDVVVGLRTGSTSIAKAEAHGLSVTDVPSAVAAADVVMVLTPDEFQAHLYKSDIEPNLKEGATLAFAHGFAIHYNQIVPRADLDVIMIAPKAPGHTVRTEFTKGGGIPDLIAIFQDASGSAKELALSYACGVGGGRTGIIETTFKDETETDLFGEQAVLCGGAVELVKAGFETLTEAGYAPEMAYFECLHELKLIVDLMYEGGIANMNYSISNNAEYGEYVTGPEVINDESRAAMRNALKRIQSGEYAKMFIAEGAHNYPSMTAARRNNAAHPIEQVGEKLRGMMPWIQANQIVDKTKN.

Residues 1–181 (MQVYYDKDCD…GGGRTGIIET (181 aa)) enclose the KARI N-terminal Rossmann domain. NADP(+)-binding positions include 24–27 (YGSQ), R47, S50, S52, and 82–85 (DEFQ). Residue H107 is part of the active site. G133 provides a ligand contact to NADP(+). The region spanning 182 to 327 (TFKDETETDL…EKLRGMMPWI (146 aa)) is the KARI C-terminal knotted domain. D190, E194, E226, and E230 together coordinate Mg(2+). A substrate-binding site is contributed by S251.

It belongs to the ketol-acid reductoisomerase family. The cofactor is Mg(2+).

The catalysed reaction is (2R)-2,3-dihydroxy-3-methylbutanoate + NADP(+) = (2S)-2-acetolactate + NADPH + H(+). It carries out the reaction (2R,3R)-2,3-dihydroxy-3-methylpentanoate + NADP(+) = (S)-2-ethyl-2-hydroxy-3-oxobutanoate + NADPH + H(+). The protein operates within amino-acid biosynthesis; L-isoleucine biosynthesis; L-isoleucine from 2-oxobutanoate: step 2/4. Its pathway is amino-acid biosynthesis; L-valine biosynthesis; L-valine from pyruvate: step 2/4. Functionally, involved in the biosynthesis of branched-chain amino acids (BCAA). Catalyzes an alkyl-migration followed by a ketol-acid reduction of (S)-2-acetolactate (S2AL) to yield (R)-2,3-dihydroxy-isovalerate. In the isomerase reaction, S2AL is rearranged via a Mg-dependent methyl migration to produce 3-hydroxy-3-methyl-2-ketobutyrate (HMKB). In the reductase reaction, this 2-ketoacid undergoes a metal-dependent reduction by NADPH to yield (R)-2,3-dihydroxy-isovalerate. The protein is Ketol-acid reductoisomerase (NADP(+)) of Alcanivorax borkumensis (strain ATCC 700651 / DSM 11573 / NCIMB 13689 / SK2).